The chain runs to 358 residues: Myb family transcription factor APL (358 aa).

The HTH myb-type domain maps to 31-91; the sequence is TDPKPRLRWT…HLQKFRLGKQ (61 aa). Positions 62-87 form a DNA-binding region, H-T-H motif; sequence PKTIMRVMGVKGLTLYHLKSHLQKFR. Residues 125-145 are a coiled coil; it reads RNMNEMQMEVQRRLHEQLEVQ. The LHEQLE motif lies at 138–143; sequence LHEQLE. Residues 313–358 are disordered; that stretch reads RKSGLSGDEGNNGGKLLERPSPRRSPLSPMMNPNGGLIQGRNSPFG.

Belongs to the MYB-CC family. Expressed in shoots and roots, specifically in the developing protophloem sieve elements. Detected in phloem and/or cambium. Expressed in the phloem tissues of various organs, including leaves and cotyledons, during vegetative growth.

The protein localises to the nucleus. Functionally, transcription factor required for phloem identity. Has a dual role both in promoting phloem differentiation and in repressing xylem differentiation during vascular development. Regulates the expression of the transcription factor NAC045 (AC A4VCM0). May activate the transcription of specific genes involved in phosphate uptake or assimilation. Promotes flowering through transcriptional activation of both FT and its transport machinery component, FTIP1. The protein is Myb family transcription factor APL of Arabidopsis thaliana (Mouse-ear cress).